Here is a 447-residue protein sequence, read N- to C-terminus: GTPase Der (447 aa).

EngA-type G domains are found at residues 3–167 (PVIA…QLPE) and 180–353 (IRLA…KAAT). Residues 9–16 (GRPNVGKS), 56–60 (DTGGF), 119–122 (NKAE), 186–193 (GRPNVGKS), 233–237 (DTAGL), and 298–301 (NKWD) contribute to the GTP site. Residues 353 to 438 (TCKMPTPVLT…PLRIEMKTSR (86 aa)) form the KH-like domain.

The protein belongs to the TRAFAC class TrmE-Era-EngA-EngB-Septin-like GTPase superfamily. EngA (Der) GTPase family. Associates with the 50S ribosomal subunit.

Functionally, GTPase that plays an essential role in the late steps of ribosome biogenesis. The protein is GTPase Der of Paracidovorax citrulli (strain AAC00-1) (Acidovorax citrulli).